The sequence spans 357 residues: Protein Wnt-9b (357 aa).

Positions 1–22 are cleaved as a signal peptide; the sequence is MRPPPALALAGLCLLALPAAAA. 11 cysteine pairs are disulfide-bonded: Cys89–Cys100, Cys135–Cys143, Cys145–Cys162, Cys210–Cys224, Cys212–Cys219, Cys291–Cys316, Cys305–Cys311, Cys315–Cys355, Cys331–Cys346, Cys333–Cys343, and Cys338–Cys339. The N-linked (GlcNAc...) asparagine glycan is linked to Asn99. Ser216 carries O-palmitoleoyl serine; by PORCN lipidation.

It belongs to the Wnt family. Forms a soluble 1:1 complex with AFM; this prevents oligomerization and is required for prolonged biological activity. The complex with AFM may represent the physiological form in body fluids. Component of the Wnt-Fzd-LRP5-LRP6 signaling complex that contains a WNT protein, a FZD protein and LRP5 or LRP6. Interacts directly in the complex with LRP6. Interacts with PKD1 (via extracellular domain). In terms of processing, palmitoleoylation is required for efficient binding to frizzled receptors. Depalmitoleoylation leads to Wnt signaling pathway inhibition. Moderately expressed in fetal kidney and adult kidney. Also found in brain.

Its subcellular location is the secreted. It is found in the extracellular space. The protein localises to the extracellular matrix. Ligand for members of the frizzled family of seven transmembrane receptors. Functions in the canonical Wnt/beta-catenin signaling pathway. Required for normal embryonic kidney development, and for normal development of the urogenital tract, including uterus and part of the oviduct and the upper vagina in females, and epididymis and vas deferens in males. Activates a signaling cascade in the metanephric mesenchyme that induces tubulogenesis. Acts upstream of WNT4 in the signaling pathways that mediate development of kidney tubules and the Muellerian ducts. Plays a role in cranofacial development and is required for normal fusion of the palate during embryonic development. This Homo sapiens (Human) protein is Protein Wnt-9b (WNT9B).